We begin with the raw amino-acid sequence, 541 residues long: Neutral amino acid transporter B(0) (541 aa).

Met1 carries the post-translational modification N-acetylmethionine. Residues Met1–Ala51 lie on the Cytoplasmic side of the membrane. Residues Asn52–Leu81 traverse the membrane as a helical segment. Topologically, residues Gly82–Glu94 are extracellular. A helical transmembrane segment spans residues Leu95–Ala116. At Ala117 to Trp130 the chain is on the cytoplasmic side. Residues Ala131–Leu153 form a helical membrane-spanning segment. The Extracellular portion of the chain corresponds to Gln154–Gln224. Asn163 and Asn212 each carry an N-linked (GlcNAc...) asparagine glycan. The chain crosses the membrane as a helical span at residues Glu225–Leu248. Over Gly249 to Arg257 the chain is Cytoplasmic. Residues Phe258 to Val285 traverse the membrane as a helical segment. At Ala286–Ile306 the chain is on the extracellular side. A helical transmembrane segment spans residues Leu307–Phe328. The Cytoplasmic portion of the chain corresponds to Thr329–Pro333. An intramembrane region (discontinuously helical) is located at residues Tyr334 to Val364. Residues Glu365 to His373 lie on the Cytoplasmic side of the membrane. A helical transmembrane segment spans residues Ile374–Phe400. Na(+) contacts are provided by Gly382, Thr384, and Asn386. Residues Ile401 to Lys413 are Extracellular-facing. Residues Ile414 to Asn447 constitute an intramembrane region (discontinuously helical). Residues Leu448 to Asp460 are Extracellular-facing. Residues Trp461–Leu482 traverse the membrane as a helical segment. Residues Asn471 and Asp475 each contribute to the Na(+) site. At Gln483 to Met541 the chain is on the cytoplasmic side. At Ser493 the chain carries Phosphoserine. Thr494 carries the phosphothreonine modification. Phosphoserine is present on residues Ser503, Ser535, and Ser539. A disordered region spans residues Pro511–Met541.

It belongs to the dicarboxylate/amino acid:cation symporter (DAACS) (TC 2.A.23) family. SLC1A5 subfamily. As to quaternary structure, homotrimer. Interacts with ERVH48-1/suppressyn; may negatively regulate syncytialization. As to expression, placenta, lung, skeletal muscle, kidney, pancreas, and intestine. Expressed in CD34-positive hematopoietic progenitors (at protein level).

It localises to the cell membrane. It is found in the melanosome. The enzyme catalyses L-glutamine(out) + L-serine(in) + Na(+)(out) = L-glutamine(in) + L-serine(out) + Na(+)(in). It carries out the reaction L-glutamine(in) + L-serine(out) + Na(+)(out) = L-glutamine(out) + L-serine(in) + Na(+)(in). The catalysed reaction is L-threonine(in) + L-glutamine(out) + Na(+)(out) = L-threonine(out) + L-glutamine(in) + Na(+)(in). It catalyses the reaction L-threonine(out) + L-glutamine(in) + Na(+)(out) = L-threonine(in) + L-glutamine(out) + Na(+)(in). The enzyme catalyses L-asparagine(in) + L-glutamine(out) + Na(+)(out) = L-asparagine(out) + L-glutamine(in) + Na(+)(in). It carries out the reaction L-asparagine(out) + L-glutamine(in) + Na(+)(out) = L-asparagine(in) + L-glutamine(out) + Na(+)(in). The catalysed reaction is L-glutamine(in) + L-alanine(out) + Na(+)(out) = L-glutamine(out) + L-alanine(in) + Na(+)(in). It catalyses the reaction L-valine(out) + L-glutamine(in) + Na(+)(out) = L-valine(in) + L-glutamine(out) + Na(+)(in). The enzyme catalyses L-glutamine(in) + L-methionine(out) + Na(+)(out) = L-glutamine(out) + L-methionine(in) + Na(+)(in). It carries out the reaction L-glutamine(in) + L-glutamate(out) + Na(+)(out) + H(+)(out) = L-glutamine(out) + L-glutamate(in) + Na(+)(in) + H(+)(in). The catalysed reaction is D-serine(in) + L-glutamine(out) + Na(+)(out) = D-serine(out) + L-glutamine(in) + Na(+)(in). It catalyses the reaction D-serine(in) + L-alanine(out) + Na(+)(out) = D-serine(out) + L-alanine(in) + Na(+)(in). The enzyme catalyses nitrate(in) = nitrate(out). It carries out the reaction iodide(out) = iodide(in). The catalysed reaction is thiocyanate(in) = thiocyanate(out). With respect to regulation, regulated by L-cysteine, which can either inhibit substrate influx or trigger substrate efflux without being transported itself. Functionally, sodium-coupled antiporter of neutral amino acids. In a tri-substrate transport cycle, exchanges neutral amino acids between the extracellular and intracellular compartments, coupled to the inward cotransport of at least one sodium ion. The preferred substrate is the essential amino acid L-glutamine, a precursor for biosynthesis of proteins, nucleotides and amine sugars as well as an alternative fuel for mitochondrial oxidative phosphorylation. Exchanges L-glutamine with other neutral amino acids such as L-serine, L-threonine and L-asparagine in a bidirectional way. Provides L-glutamine to proliferating stem and activated cells driving the metabolic switch toward cell differentiation. The transport cycle is usually pH-independent, with the exception of L-glutamate. Transports extracellular L-glutamate coupled to the cotransport of one proton and one sodium ion in exchange for intracellular L-glutamine counter-ion. May provide for L-glutamate uptake in glial cells regulating glutamine/glutamate cycle in the nervous system. Can transport D-amino acids. Mediates D-serine release from the retinal glia potentially affecting NMDA receptor function in retinal neurons. Displays sodium- and amino acid-dependent but uncoupled channel-like anion conductance with a preference SCN(-) &gt;&gt; NO3(-) &gt; I(-) &gt; Cl(-). Through binding of the fusogenic protein syncytin-1/ERVW-1 may mediate trophoblasts syncytialization, the spontaneous fusion of their plasma membranes, an essential process in placental development. Its function is as follows. (Microbial infection) Acts as a cell surface receptor for Feline endogenous virus RD114. (Microbial infection) Acts as a cell surface receptor for Baboon M7 endogenous virus. In terms of biological role, (Microbial infection) Acts as a cell surface receptor for type D simian retroviruses. In Homo sapiens (Human), this protein is Neutral amino acid transporter B(0).